Consider the following 397-residue polypeptide: Acylalkylpyrone synthase csyB (397 aa).

Residues Lys50 and 50-57 (KMLEINRK) contribute to the CoA site. Cys155 functions as the Nucleophile in the catalytic mechanism. A substrate-binding site is contributed by 214 to 215 (GD). Residues Ile267, Gly312, 312–315 (GGYA), Tyr314, and Ala315 contribute to the CoA site. His377 is a catalytic residue.

Belongs to the thiolase-like superfamily. Chalcone/stilbene synthases family. Homodimer.

Functionally, acylalkylpyrone synthase that catalyzes not only the polyketide chain elongation but also the one-pot condensation of two beta-ketoacyl units to produce the 3-acyl-4-hydroxy-6-alkyl-alpha-pyrone (AcAP) scaffold, a precursor of csypyrone B. The enzyme reaction is initiated by the loading of acetoacetyl-CoA onto Cys-155, and subsequent thioester bond cleavage by the nucleophilic water generates the beta-keto acid intermediate, which is placed within a pocket. The second beta-ketoacyl unit is then produced by polyketide chain elongation of fatty acyl-CoA with one molecule of malonyl-CoA, and the condensation with the beta-ketoacid generates the final products. Csypyrone B1 is the major product and contains a propanoic acid side-chain, whereas csypyrones B2 and B3 are minor compounds that contain butyric or pentanoic acid side-chains, respectively. This chain is Acylalkylpyrone synthase csyB, found in Aspergillus oryzae (strain ATCC 42149 / RIB 40) (Yellow koji mold).